We begin with the raw amino-acid sequence, 321 residues long: MTKYALVGDVGGTNARLALCDIASGEISQAKTYSGLDYPSLEAVVRVYLDEHSVSVEDGCIAIACPITGDWVAMTNHTWAFSIAEMKKNLGFSHLEIINDFTAVSMAIPMLKKEHLIQFGGGEPVDGKPIAVYGAGTGLGVAHLVHVDKRWISLPGEGGHVDFAPNSEEEAMILEILRAEIGHVSAERVLSGPGLVNLYRAIVKSDNRLPENLRPKDITERALADNCIDCRRALSLFCVIMGRFGGDLALTMGTYGGVYIAGGIVPRFLEFFKASGFRGGFEDKGRFKDYVHGIPVYLIVHDNPGLLGSGAHLRQTLGHIL.

8–13 (GDVGGT) is an ATP binding site.

It belongs to the bacterial glucokinase family.

The protein localises to the cytoplasm. The enzyme catalyses D-glucose + ATP = D-glucose 6-phosphate + ADP + H(+). This is Glucokinase from Salmonella heidelberg (strain SL476).